A 537-amino-acid chain; its full sequence is CTP synthase (537 aa).

Residues 1-265 (MTKFIFVTGG…GKYLIKRLKL (265 aa)) are amidoligase domain. Position 13 (serine 13) interacts with CTP. Serine 13 is a binding site for UTP. 14–19 (GLGKGI) contributes to the ATP binding site. Tyrosine 54 provides a ligand contact to L-glutamine. ATP is bound at residue aspartate 71. Mg(2+)-binding residues include aspartate 71 and glutamate 139. CTP contacts are provided by residues 146-148 (DIE), 186-191 (KTKPTQ), and lysine 222. UTP-binding positions include 186–191 (KTKPTQ) and lysine 222. One can recognise a Glutamine amidotransferase type-1 domain in the interval 290 to 532 (EIAIVGKYVK…VRAAKEYKQE (243 aa)). Residue glycine 351 participates in L-glutamine binding. Cysteine 378 (nucleophile; for glutamine hydrolysis) is an active-site residue. Residues 379–382 (FGFQ), glutamate 402, and arginine 459 contribute to the L-glutamine site. Residues histidine 505 and glutamate 507 contribute to the active site.

Belongs to the CTP synthase family. As to quaternary structure, homotetramer.

It catalyses the reaction UTP + L-glutamine + ATP + H2O = CTP + L-glutamate + ADP + phosphate + 2 H(+). The enzyme catalyses L-glutamine + H2O = L-glutamate + NH4(+). The catalysed reaction is UTP + NH4(+) + ATP = CTP + ADP + phosphate + 2 H(+). Its pathway is pyrimidine metabolism; CTP biosynthesis via de novo pathway; CTP from UDP: step 2/2. With respect to regulation, allosterically activated by GTP, when glutamine is the substrate; GTP has no effect on the reaction when ammonia is the substrate. The allosteric effector GTP functions by stabilizing the protein conformation that binds the tetrahedral intermediate(s) formed during glutamine hydrolysis. Inhibited by the product CTP, via allosteric rather than competitive inhibition. Its function is as follows. Catalyzes the ATP-dependent amination of UTP to CTP with either L-glutamine or ammonia as the source of nitrogen. Regulates intracellular CTP levels through interactions with the four ribonucleotide triphosphates. This chain is CTP synthase, found in Pyrococcus horikoshii (strain ATCC 700860 / DSM 12428 / JCM 9974 / NBRC 100139 / OT-3).